A 343-amino-acid polypeptide reads, in one-letter code: MFNNQMLGVIDETTYKHSLQDLTAQRSLGAIPFAGRYRLIDFMLSNMVNADIRSVAIFPKYRYRSLMDHLGAGKEWDLHRKKDGLFFFPSPHLHHEYDEFGSFRQFSDHLDYFHRSTQQYAVISNSHTVCNIQFQYVLKRHQEVGCDVTEVFQDGQSLQIYIMSTTLLKDLIYGHSEKGYKTIQEAVEKESSALTICPYEYSGYAAVIDSVEKYYTHSMELIQPRFWQQVFLPQQPIYTKVKDEPPTKYGKHSTVKNSLVANGCVLEGEVENCILFRAVHVGKGTKLKNCIIMQKTQIGEDCLLEQVISDKDVKIGKATEAAGTAEQPLVLRKGLVQGELMNS.

Belongs to the bacterial/plant glucose-1-phosphate adenylyltransferase family.

Functionally, required for the synthesis of glycogen. The protein is Glycogen biosynthesis protein GlgD (glgD) of Bacillus subtilis (strain 168).